Consider the following 346-residue polypeptide: Calcium uniporter protein, mitochondrial (346 aa).

The Mitochondrial matrix portion of the chain corresponds to 1–195 (MTKGKLLTTP…ECDKAAHRGA (195 aa)). A disordered region spans residues 55 to 120 (ELPPPDPQDS…GEGKDEGEFV (66 aa)). Composition is skewed to basic and acidic residues over residues 76 to 91 (MEAK…KADT) and 109 to 119 (REGEGKDEGEF). The chain crosses the membrane as a helical span at residues 196-216 (QRIALAGCGGLIGYWYIVYRL). Over 217-226 (TFETDLGWDV) the chain is Mitochondrial intermembrane. Residues 224-232 (WDVMEPVTY) carry the Selectivity filter motif. Residues 227 to 248 (MEPVTYLVGLSTLIGGYMWFLW) traverse the membrane as a helical segment. Glu-228 provides a ligand contact to Ca(2+). The Mitochondrial matrix portion of the chain corresponds to 249–346 (HNREVSYRSA…KEGEEDDEDD (98 aa)). The segment at 306–346 (WNETQDEGGDEKVTKALRDERKNNNGTKNKSKEGEEDDEDD) is disordered. Residues 315 to 328 (DEKVTKALRDERKN) show a composition bias toward basic and acidic residues.

This sequence belongs to the MCU (TC 1.A.77) family. In terms of assembly, homotetramer, assembles in a dimer or dimers configuration with two interfaces.

It is found in the mitochondrion inner membrane. The enzyme catalyses Ca(2+)(in) = Ca(2+)(out). Functionally, highly selective calcium channel localized to the inner mitochondrial membrane, which mediates calcium uptake into the mitochondrial matrix. Mitochondrial calcium homeostasis plays key roles in cellular physiology and regulates ATP production, cytoplasmic calcium signals and activation of cell death pathways. Sufficient to operate as a pore-forming channel without the need of calcium-sensor or auxiliary subunit. In Cyphellophora europaea (strain CBS 101466) (Phialophora europaea), this protein is Calcium uniporter protein, mitochondrial.